The following is a 677-amino-acid chain: High-affinity choline transport protein (677 aa).

The next 12 membrane-spanning stretches (helical) occupy residues 15-35 (PVVF…TILF), 54-74 (FGWY…CIAC), 94-114 (LSWA…FFSV), 144-164 (FHYG…LGYF), 196-216 (IAAV…GVVQ), 233-253 (AKAA…TSGV), 265-285 (VALA…SFLL), 319-339 (WTLF…LFLA), 350-370 (FVLG…SVFG), 412-432 (VATI…ALVL), 452-472 (VFWS…NGIS), and 477-497 (TTVI…AGLY).

Belongs to the BCCT transporter (TC 2.A.15) family.

It localises to the cell inner membrane. It catalyses the reaction choline(in) + H(+)(in) = choline(out) + H(+)(out). Its pathway is amine and polyamine biosynthesis; betaine biosynthesis via choline pathway. High-affinity uptake of choline driven by a proton-motive force. This chain is High-affinity choline transport protein (betT), found in Escherichia coli O157:H7.